The primary structure comprises 195 residues: MELNIHNAEILLSAANKSHYPQDELPEIALAGRSNVGKSSFINTMLNRKNLARTSGKPGKTQLLNFFNIDDKMRFVDVPGYGYARVSKKEREKWGCMIEEYLTTRENLRAVVSLVDLRHDPSADDVQMYEFLKYYEIPVIIVATKADKIPRGKWNKHESAIKKKLNFDPSDDFILFSSVSKAGMDEAWDAILEKL.

Residues 24–195 (ELPEIALAGR…EAWDAILEKL (172 aa)) enclose the EngB-type G domain. GTP is bound by residues 32 to 39 (GRSNVGKS), 59 to 63 (GKTQL), 77 to 80 (DVPG), 144 to 147 (TKAD), and 176 to 178 (FSS). 2 residues coordinate Mg(2+): S39 and T61.

It belongs to the TRAFAC class TrmE-Era-EngA-EngB-Septin-like GTPase superfamily. EngB GTPase family. Requires Mg(2+) as cofactor.

Necessary for normal cell division and for the maintenance of normal septation. The sequence is that of Probable GTP-binding protein EngB from Streptococcus pneumoniae (strain P1031).